A 334-amino-acid polypeptide reads, in one-letter code: Putative transport protein MTH_1211 (334 aa).

Helical transmembrane passes span 24–44 (AIVV…AYIV), 60–80 (VSII…LVFT), 84–104 (IINS…PGAG), 131–151 (YVVA…VFLS), 189–209 (VLLS…LMAA), 220–240 (AILL…GPWA), 255–275 (ILRG…DIYL), and 289–309 (MIFL…GFIV).

The protein belongs to the autoinducer-2 exporter (AI-2E) (TC 2.A.86) family.

The protein resides in the cell membrane. This is Putative transport protein MTH_1211 from Methanothermobacter thermautotrophicus (strain ATCC 29096 / DSM 1053 / JCM 10044 / NBRC 100330 / Delta H) (Methanobacterium thermoautotrophicum).